Consider the following 75-residue polypeptide: Tautomerase PptA (75 aa).

Pro-2 (proton acceptor; via imino nitrogen) is an active-site residue.

Belongs to the 4-oxalocrotonate tautomerase family. PptA subfamily. As to quaternary structure, homodimer.

Its subcellular location is the cytoplasm. The protein is Tautomerase PptA of Escherichia coli O127:H6 (strain E2348/69 / EPEC).